A 179-amino-acid chain; its full sequence is Large ribosomal subunit protein bL25 (179 aa).

The protein belongs to the bacterial ribosomal protein bL25 family. CTC subfamily. Part of the 50S ribosomal subunit; part of the 5S rRNA/L5/L18/L25 subcomplex. Contacts the 5S rRNA. Binds to the 5S rRNA independently of L5 and L18.

In terms of biological role, this is one of the proteins that binds to the 5S RNA in the ribosome where it forms part of the central protuberance. The polypeptide is Large ribosomal subunit protein bL25 (Desulfitobacterium hafniense (strain DSM 10664 / DCB-2)).